A 257-amino-acid polypeptide reads, in one-letter code: Expansin-A10 (257 aa).

The N-terminal stretch at 1–18 is a signal peptide; sequence MAPCLLLVLFLLPALATG. Residues 50-163 enclose the Expansin-like EG45 domain; sequence GGACGFGDLG…RRVNCLRDGG (114 aa). An Expansin-like CBD domain is found at 173–252; that stretch reads FFLTVLISNV…EWDFGKTYTG (80 aa).

It belongs to the expansin family. Expansin A subfamily. In terms of tissue distribution, expressed in panicles and flowers.

Its subcellular location is the secreted. The protein localises to the cell wall. The protein resides in the membrane. Functionally, may cause loosening and extension of plant cell walls by disrupting non-covalent bonding between cellulose microfibrils and matrix glucans. No enzymatic activity has been found. May be required for rapid internodal elongation in deepwater rice during submergence. The polypeptide is Expansin-A10 (EXPA10) (Oryza sativa subsp. japonica (Rice)).